Here is a 469-residue protein sequence, read N- to C-terminus: Ribulose bisphosphate carboxylase large chain (469 aa).

At lysine 8 the chain carries N6,N6,N6-trimethyllysine. 2 residues coordinate substrate: asparagine 117 and threonine 167. Lysine 169 (proton acceptor) is an active-site residue. Residue lysine 171 participates in substrate binding. The Mg(2+) site is built by lysine 195, aspartate 197, and glutamate 198. Lysine 195 carries the N6-carboxylysine modification. Catalysis depends on histidine 288, which acts as the Proton acceptor. Substrate contacts are provided by arginine 289, histidine 321, and serine 373.

It belongs to the RuBisCO large chain family. Type I subfamily. Heterohexadecamer of 8 large chains and 8 small chains; disulfide-linked. The disulfide link is formed within the large subunit homodimers. Mg(2+) serves as cofactor. Post-translationally, the disulfide bond which can form in the large chain dimeric partners within the hexadecamer appears to be associated with oxidative stress and protein turnover.

It localises to the plastid. Its subcellular location is the chloroplast. The catalysed reaction is 2 (2R)-3-phosphoglycerate + 2 H(+) = D-ribulose 1,5-bisphosphate + CO2 + H2O. The enzyme catalyses D-ribulose 1,5-bisphosphate + O2 = 2-phosphoglycolate + (2R)-3-phosphoglycerate + 2 H(+). Its function is as follows. RuBisCO catalyzes two reactions: the carboxylation of D-ribulose 1,5-bisphosphate, the primary event in carbon dioxide fixation, as well as the oxidative fragmentation of the pentose substrate in the photorespiration process. Both reactions occur simultaneously and in competition at the same active site. The protein is Ribulose bisphosphate carboxylase large chain of Coleonema pulchellum (Confetti bush).